The chain runs to 379 residues: Chaperone protein DnaJ (379 aa).

The J domain occupies 7-72 (CYYETLEVER…DKRAAYDRYG (66 aa)). Residues 135–213 (GKTAQIEIPV…CTGSGRVTKE (79 aa)) form a CR-type zinc finger. Cys148, Cys151, Cys165, Cys168, Cys187, Cys190, Cys201, and Cys204 together coordinate Zn(2+). CXXCXGXG motif repeat units lie at residues 148-155 (CEACSGTG), 165-172 (CSTCGGAG), 187-194 (CPSCQGRG), and 201-208 (CPSCTGSG).

It belongs to the DnaJ family. In terms of assembly, homodimer. It depends on Zn(2+) as a cofactor.

The protein localises to the cytoplasm. Participates actively in the response to hyperosmotic and heat shock by preventing the aggregation of stress-denatured proteins and by disaggregating proteins, also in an autonomous, DnaK-independent fashion. Unfolded proteins bind initially to DnaJ; upon interaction with the DnaJ-bound protein, DnaK hydrolyzes its bound ATP, resulting in the formation of a stable complex. GrpE releases ADP from DnaK; ATP binding to DnaK triggers the release of the substrate protein, thus completing the reaction cycle. Several rounds of ATP-dependent interactions between DnaJ, DnaK and GrpE are required for fully efficient folding. Also involved, together with DnaK and GrpE, in the DNA replication of plasmids through activation of initiation proteins. This is Chaperone protein DnaJ from Rhodopseudomonas palustris (strain ATCC BAA-98 / CGA009).